Reading from the N-terminus, the 387-residue chain is MFHILNKGSSKSCIYTRPCLKRFYHQHYEHTGKLSRTFFSPTHIKYNRLSTLDTSTSTANAAPDPQVLTFLSKRMQAAPLYPKPSAFLELGKPRLTVLVVLSTMSSYALAPYPGLSFNTLAWLTMGTALCSISANAFNQSMEPMLDCQMARTRSRPIPRGAIRPEYAWLFATLTGIAGTSMSFLVNPTVGWLGLGNIVLYMGIYTPLKRISIVNTWVGSLVGAIPPLMGWAACSGGDLLSHPGGLITAAMLFAWQFPHFNAFSTMVKDDYKKCGYQMMAWKNPALNARVSLRYALAFLPLSYAYISTGLVGPWYAVPATGTNMFLIARAWKFYRNRNYQNARSLFFASLLHLPLLFTLTLACHMIKVWNDSDSKNPVLGSEEDTLKY.

8 helical membrane-spanning segments follow: residues 95-115, 117-137, 183-203, 212-232, 242-262, 284-306, 311-330, and 345-365; these read LTVL…YPGL, FNTL…ANAF, FLVN…YMGI, IVNT…GWAA, PGGL…FNAF, ALNA…AYIS, GPWY…ARAW, and FFAS…CHMI.

It belongs to the UbiA prenyltransferase family.

It localises to the mitochondrion membrane. It catalyses the reaction heme b + (2E,6E)-farnesyl diphosphate + H2O = Fe(II)-heme o + diphosphate. Functionally, converts protoheme IX and farnesyl diphosphate to heme O. The sequence is that of Protoheme IX farnesyltransferase, mitochondrial (cox10) from Schizosaccharomyces pombe (strain 972 / ATCC 24843) (Fission yeast).